Reading from the N-terminus, the 545-residue chain is MMGHRPVLVLSQNTKRESGRKVQSGNINAAKTIADIIRTCLGPKSMMKMLLDPMGGIVMTNDGNAILREIQVQHPAAKSMIEISRTQDEEVGDGTTSVIILAGEMLSVAEHFLEQQMHPTVVISAYRMALDDMISTLKKISTPVDVNNREMMLSIINSSITTKVISRWSSLACNIALDAVKTVQFEENGRKEIDIKKYARVEKIPGGIIEDSCVLRGVMINKDVTHPRMRRYIKNPRIVLLDSSLEYKKGESQTDIEITREEDFTRILQMEEEYIHQLCEDIIQLKPDVVITEKGISDLAQHYLMRANVTAIRRVRKTDNNRIARACGARIVSRPEELREDDVGTGAGLLEIKKIGDEYFTFITDCKDPKACTILLRGASKEILSEVERNLQDAMQVCRNVLLDPQLVPGGGASEMAVAHALTEKSKAMTGVEQWPYRAVAQALEVIPRTLIQNCGASTIRLLTSLRAKHTQESCETWGVNGETGTLVDMKELGIWEPLAVKLQTYKTAVETAVLLLRIDDIVSGHKKKGDDQNRQTGAPDAGQE.

Met1 is modified (N-acetylmethionine). Residues 1–24 (MMGHRPVLVLSQNTKRESGRKVQS) form a disordered region. The residue at position 11 (Ser11) is a Phosphoserine. Lys15 is covalently cross-linked (Glycyl lysine isopeptide (Lys-Gly) (interchain with G-Cter in SUMO2)). Gly42 provides a ligand contact to ADP. Gly42 serves as a coordination point for ATP. Asp93 provides a ligand contact to Mg(2+). Positions 94, 95, 96, 97, 162, and 163 each coordinate ADP. 3 residues coordinate ATP: Gly94, Thr95, and Thr96. Phosphoserine is present on Ser170. Lys222 carries the post-translational modification N6-acetyllysine. 2 positions are modified to phosphoserine: Ser243 and Ser244. Residue Tyr247 is modified to Phosphotyrosine. Residues Lys248 and Lys249 each participate in a glycyl lysine isopeptide (Lys-Gly) (interchain with G-Cter in SUMO2) cross-link. A Phosphoserine modification is found at Ser252. The cysteines at positions 366 and 372 are disulfide-linked. A Glycyl lysine isopeptide (Lys-Gly) (interchain with G-Cter in SUMO2) cross-link involves residue Lys381. Gly411 contacts ADP. Gly411 is a binding site for ATP. Phosphothreonine occurs at positions 430 and 459. Residues Gly482, Glu483, Glu497, and Lys502 each coordinate ADP. An ATP-binding site is contributed by Gly482. Glu497 provides a ligand contact to ATP. Residues 526 to 545 (HKKKGDDQNRQTGAPDAGQE) are disordered.

Belongs to the TCP-1 chaperonin family. In terms of assembly, component of the chaperonin-containing T-complex (TRiC), a hexadecamer composed of two identical back-to-back stacked rings enclosing a protein folding chamber. Each ring is made up of eight different subunits: TCP1/CCT1, CCT2, CCT3, CCT4, CCT5, CCT6A/CCT6, CCT7, CCT8. Interacts with PACRG. Interacts with DNAAF4. Interacts with DLEC1. Post-translationally, the N-terminus is blocked.

The protein localises to the cytoplasm. It catalyses the reaction ATP + H2O = ADP + phosphate + H(+). Its function is as follows. Component of the chaperonin-containing T-complex (TRiC), a molecular chaperone complex that assists the folding of actin, tubulin and other proteins upon ATP hydrolysis. The TRiC complex mediates the folding of WRAP53/TCAB1, thereby regulating telomere maintenance. As part of the TRiC complex may play a role in the assembly of BBSome, a complex involved in ciliogenesis regulating transports vesicles to the cilia. The chain is T-complex protein 1 subunit gamma (Cct3) from Mus musculus (Mouse).